We begin with the raw amino-acid sequence, 455 residues long: ATP-dependent protease ATPase subunit HslU (455 aa).

Residues Ile-19 and 61–66 (GVGKTE) contribute to the ATP site. Residues 144 to 163 (ESKVGFANEPAEDAASKKEK) are disordered. ATP contacts are provided by Asp-268, Glu-333, and Arg-405.

The protein belongs to the ClpX chaperone family. HslU subfamily. A double ring-shaped homohexamer of HslV is capped on each side by a ring-shaped HslU homohexamer. The assembly of the HslU/HslV complex is dependent on binding of ATP.

It is found in the cytoplasm. Its function is as follows. ATPase subunit of a proteasome-like degradation complex; this subunit has chaperone activity. The binding of ATP and its subsequent hydrolysis by HslU are essential for unfolding of protein substrates subsequently hydrolyzed by HslV. HslU recognizes the N-terminal part of its protein substrates and unfolds these before they are guided to HslV for hydrolysis. The sequence is that of ATP-dependent protease ATPase subunit HslU from Francisella tularensis subsp. novicida (strain U112).